The primary structure comprises 331 residues: DNA-directed RNA polymerase subunit alpha (331 aa).

The tract at residues 1 to 237 (MQSSVTEFLI…NQLESFVYLR (237 aa)) is alpha N-terminal domain (alpha-NTD). Residues 251–331 (FDPILLRPVD…NWPPDNILDN (81 aa)) form an alpha C-terminal domain (alpha-CTD) region.

It belongs to the RNA polymerase alpha chain family. Homodimer. The RNAP catalytic core consists of 2 alpha, 1 beta, 1 beta' and 1 omega subunit. When a sigma factor is associated with the core the holoenzyme is formed, which can initiate transcription.

It carries out the reaction RNA(n) + a ribonucleoside 5'-triphosphate = RNA(n+1) + diphosphate. DNA-dependent RNA polymerase catalyzes the transcription of DNA into RNA using the four ribonucleoside triphosphates as substrates. The chain is DNA-directed RNA polymerase subunit alpha from Buchnera aphidicola subsp. Baizongia pistaciae (strain Bp).